Here is a 1342-residue protein sequence, read N- to C-terminus: DNA-directed RNA polymerase subunit beta (1342 aa).

Belongs to the RNA polymerase beta chain family. The RNAP catalytic core consists of 2 alpha, 1 beta, 1 beta' and 1 omega subunit. When a sigma factor is associated with the core the holoenzyme is formed, which can initiate transcription.

The enzyme catalyses RNA(n) + a ribonucleoside 5'-triphosphate = RNA(n+1) + diphosphate. In terms of biological role, DNA-dependent RNA polymerase catalyzes the transcription of DNA into RNA using the four ribonucleoside triphosphates as substrates. This chain is DNA-directed RNA polymerase subunit beta, found in Blochmanniella floridana.